The sequence spans 342 residues: Holliday junction branch migration complex subunit RuvB (342 aa).

The segment at M1–Y184 is large ATPase domain (RuvB-L). ATP is bound by residues L23, R24, G65, K68, T69, T70, E131–Y133, R174, Y184, and R221. A Mg(2+)-binding site is contributed by T69. Positions D185–N255 are small ATPAse domain (RuvB-S). A head domain (RuvB-H) region spans residues K258–D342. DNA-binding residues include R313 and R318.

This sequence belongs to the RuvB family. As to quaternary structure, homohexamer. Forms an RuvA(8)-RuvB(12)-Holliday junction (HJ) complex. HJ DNA is sandwiched between 2 RuvA tetramers; dsDNA enters through RuvA and exits via RuvB. An RuvB hexamer assembles on each DNA strand where it exits the tetramer. Each RuvB hexamer is contacted by two RuvA subunits (via domain III) on 2 adjacent RuvB subunits; this complex drives branch migration. In the full resolvosome a probable DNA-RuvA(4)-RuvB(12)-RuvC(2) complex forms which resolves the HJ.

Its subcellular location is the cytoplasm. It carries out the reaction ATP + H2O = ADP + phosphate + H(+). In terms of biological role, the RuvA-RuvB-RuvC complex processes Holliday junction (HJ) DNA during genetic recombination and DNA repair, while the RuvA-RuvB complex plays an important role in the rescue of blocked DNA replication forks via replication fork reversal (RFR). RuvA specifically binds to HJ cruciform DNA, conferring on it an open structure. The RuvB hexamer acts as an ATP-dependent pump, pulling dsDNA into and through the RuvAB complex. RuvB forms 2 homohexamers on either side of HJ DNA bound by 1 or 2 RuvA tetramers; 4 subunits per hexamer contact DNA at a time. Coordinated motions by a converter formed by DNA-disengaged RuvB subunits stimulates ATP hydrolysis and nucleotide exchange. Immobilization of the converter enables RuvB to convert the ATP-contained energy into a lever motion, pulling 2 nucleotides of DNA out of the RuvA tetramer per ATP hydrolyzed, thus driving DNA branch migration. The RuvB motors rotate together with the DNA substrate, which together with the progressing nucleotide cycle form the mechanistic basis for DNA recombination by continuous HJ branch migration. Branch migration allows RuvC to scan DNA until it finds its consensus sequence, where it cleaves and resolves cruciform DNA. This is Holliday junction branch migration complex subunit RuvB from Bacteroides fragilis (strain ATCC 25285 / DSM 2151 / CCUG 4856 / JCM 11019 / LMG 10263 / NCTC 9343 / Onslow / VPI 2553 / EN-2).